The primary structure comprises 218 residues: Adenylate kinase (218 aa).

ATP is bound at residue 10–15 (GAGKGT). The tract at residues 30 to 59 (STGDMLRAAVKAGSPLGLKVKDIMTSGGLV) is NMP. AMP-binding positions include T31, R36, 57-59 (GLV), 85-88 (GFPR), and Q92. Residues 122–159 (GRRVHEASGRVYHVKHNAPKTEGVDDETGEPLVQRDDD) are LID. Residues R123 and 132 to 133 (VY) contribute to the ATP site. AMP contacts are provided by R156 and R167. G203 contacts ATP.

The protein belongs to the adenylate kinase family. In terms of assembly, monomer.

The protein resides in the cytoplasm. It carries out the reaction AMP + ATP = 2 ADP. Its pathway is purine metabolism; AMP biosynthesis via salvage pathway; AMP from ADP: step 1/1. In terms of biological role, catalyzes the reversible transfer of the terminal phosphate group between ATP and AMP. Plays an important role in cellular energy homeostasis and in adenine nucleotide metabolism. This chain is Adenylate kinase, found in Saccharophagus degradans (strain 2-40 / ATCC 43961 / DSM 17024).